Reading from the N-terminus, the 273-residue chain is 2,3,4,5-tetrahydropyridine-2,6-dicarboxylate N-succinyltransferase (273 aa).

The substrate site is built by R104 and D141.

The protein belongs to the transferase hexapeptide repeat family. Homotrimer.

Its subcellular location is the cytoplasm. It catalyses the reaction (S)-2,3,4,5-tetrahydrodipicolinate + succinyl-CoA + H2O = (S)-2-succinylamino-6-oxoheptanedioate + CoA. It functions in the pathway amino-acid biosynthesis; L-lysine biosynthesis via DAP pathway; LL-2,6-diaminopimelate from (S)-tetrahydrodipicolinate (succinylase route): step 1/3. This is 2,3,4,5-tetrahydropyridine-2,6-dicarboxylate N-succinyltransferase from Buchnera aphidicola subsp. Schizaphis graminum (strain Sg).